The sequence spans 306 residues: Anamorsin (306 aa).

Residues Ile6 to Ser172 are N-terminal SAM-like domain. A linker region spans residues Gln173–Leu224. [2Fe-2S] cluster-binding residues include Cys237, Cys246, Cys249, and Cys251. Positions Cys237–Cys251 are fe-S binding site A. Positions 270, 273, 281, and 284 each coordinate [4Fe-4S] cluster. 2 consecutive short sequence motifs (cx2C motif) follow at residues Cys270–Cys273 and Cys281–Cys284. The fe-S binding site B stretch occupies residues Cys270–Cys284.

The protein belongs to the anamorsin family. In terms of assembly, monomer. Interacts with NDOR1. Interacts with CHCHD4. [2Fe-2S] cluster is required as a cofactor. Requires [4Fe-4S] cluster as cofactor.

The protein localises to the cytoplasm. It localises to the nucleus. The protein resides in the mitochondrion intermembrane space. Component of the cytosolic iron-sulfur (Fe-S) protein assembly (CIA) machinery required for the maturation of extramitochondrial Fe-S proteins. Part of an electron transfer chain functioning in an early step of cytosolic Fe-S biogenesis, facilitating the de novo assembly of a [4Fe-4S] cluster on the scaffold complex NUBP1-NUBP2. Electrons are transferred to CIAPIN1 from NADPH via the FAD- and FMN-containing protein NDOR1. NDOR1-CIAPIN1 are also required for the assembly of the diferric tyrosyl radical cofactor of ribonucleotide reductase (RNR), probably by providing electrons for reduction during radical cofactor maturation in the catalytic small subunit. Has anti-apoptotic effects in the cell. Involved in negative control of cell death upon cytokine withdrawal. Promotes development of hematopoietic cells. In Gallus gallus (Chicken), this protein is Anamorsin.